A 354-amino-acid polypeptide reads, in one-letter code: RH-like protein (354 aa).

The next 8 helical transmembrane spans lie at 11-31 (GCLP…FFFF), 45-65 (VATY…LGFL), 77-97 (VAFN…LDGF), 125-145 (ISVG…MVLV), 167-187 (VNIM…AWCL), 209-229 (AMLG…ALLT), 238-258 (VFNT…VSSL), and 287-307 (LISS…ISIG).

Belongs to the ammonium transporter (TC 2.A.49) family. Rh subfamily.

The protein localises to the membrane. Its function is as follows. May be part of an oligomeric complex which is likely to have a transport or channel function in the erythrocyte membrane. The sequence is that of RH-like protein from Hylobates pileatus (Pileated gibbon).